Consider the following 435-residue polypeptide: Glutamate-1-semialdehyde 2,1-aminomutase (435 aa).

Lysine 269 carries the post-translational modification N6-(pyridoxal phosphate)lysine.

The protein belongs to the class-III pyridoxal-phosphate-dependent aminotransferase family. HemL subfamily. As to quaternary structure, homodimer. Pyridoxal 5'-phosphate is required as a cofactor.

The protein resides in the cytoplasm. The catalysed reaction is (S)-4-amino-5-oxopentanoate = 5-aminolevulinate. Its pathway is porphyrin-containing compound metabolism; protoporphyrin-IX biosynthesis; 5-aminolevulinate from L-glutamyl-tRNA(Glu): step 2/2. The protein is Glutamate-1-semialdehyde 2,1-aminomutase of Gemmatimonas aurantiaca (strain DSM 14586 / JCM 11422 / NBRC 100505 / T-27).